Consider the following 55-residue polypeptide: uncharacterized protein (55 aa).

The chain crosses the membrane as a helical span at residues 24 to 46 (LFIIFFTYSYYYCGFLQSFNYII).

The protein localises to the membrane. This is an uncharacterized protein from Dictyostelium discoideum (Social amoeba).